A 191-amino-acid polypeptide reads, in one-letter code: dCTP deaminase (191 aa).

Residues 112 to 117, 136 to 138, Q157, Y173, and Q183 each bind dCTP; these read KSTYAR and TLE. E138 functions as the Proton donor/acceptor in the catalytic mechanism.

The protein belongs to the dCTP deaminase family. As to quaternary structure, homotrimer.

It carries out the reaction dCTP + H2O + H(+) = dUTP + NH4(+). It functions in the pathway pyrimidine metabolism; dUMP biosynthesis; dUMP from dCTP (dUTP route): step 1/2. Its function is as follows. Catalyzes the deamination of dCTP to dUTP. The chain is dCTP deaminase from Psychrobacter arcticus (strain DSM 17307 / VKM B-2377 / 273-4).